The sequence spans 336 residues: Mitochondrial thiamine diphosphate carrier 1 (336 aa).

6 helical membrane passes run 11 to 27 (RRAL…GGIS), 88 to 105 (VPAL…FTVL), 127 to 150 (YLSY…FDLL), 182 to 199 (LYSG…YAGL), 230 to 246 (SVSS…AGTF), and 303 to 322 (GLFP…FVVY). 3 Solcar repeats span residues 11–111 (RRAL…LKTF), 124–210 (LSPY…FKRS), and 231–328 (VSSF…ISDW).

This sequence belongs to the mitochondrial carrier (TC 2.A.29) family. In terms of tissue distribution, ubiquitous with highest expression in pollen.

Its subcellular location is the mitochondrion inner membrane. Mitochondrial transporter that mediates uptake of thiamine diphosphate (ThDP) into mitochondria. The protein is Mitochondrial thiamine diphosphate carrier 1 of Zea mays (Maize).